The following is a 725-amino-acid chain: Catalase-peroxidase (725 aa).

Composition is skewed to polar residues over residues 1–12 (MSTSNDPSNNAS) and 23–32 (PKQSAGSGTA). The signal sequence occupies residues 1–20 (MSTSNDPSNNASAGKCPFHA). The interval 1 to 35 (MSTSNDPSNNASAGKCPFHAETPKQSAGSGTANRD) is disordered. A cross-link (tryptophyl-tyrosyl-methioninium (Trp-Tyr) (with M-252)) is located at residues 105 to 226 (WHGAGTYRTV…IGATEMGLIY (122 aa)). Catalysis depends on histidine 106, which acts as the Proton acceptor. Positions 226–252 (YVNPEGPNASGEPLSAAAAIRATFGNM) form a cross-link, tryptophyl-tyrosyl-methioninium (Tyr-Met) (with W-105). Histidine 267 contacts heme b.

It belongs to the peroxidase family. Peroxidase/catalase subfamily. In terms of assembly, homodimer or homotetramer. Heme b serves as cofactor. In terms of processing, formation of the three residue Trp-Tyr-Met cross-link is important for the catalase, but not the peroxidase activity of the enzyme.

It catalyses the reaction H2O2 + AH2 = A + 2 H2O. The catalysed reaction is 2 H2O2 = O2 + 2 H2O. Functionally, bifunctional enzyme with both catalase and broad-spectrum peroxidase activity. The protein is Catalase-peroxidase of Klebsiella pneumoniae subsp. pneumoniae (strain ATCC 700721 / MGH 78578).